An 89-amino-acid chain; its full sequence is Large ribosomal subunit protein bL27 (89 aa).

The segment at 1–23 (MAHKKAGGSSRNGRDSESKRLGV) is disordered.

It belongs to the bacterial ribosomal protein bL27 family.

The chain is Large ribosomal subunit protein bL27 from Rhizobium meliloti (strain 1021) (Ensifer meliloti).